Consider the following 166-residue polypeptide: Large ribosomal subunit protein uL10 (166 aa).

The protein belongs to the universal ribosomal protein uL10 family. As to quaternary structure, part of the ribosomal stalk of the 50S ribosomal subunit. The N-terminus interacts with L11 and the large rRNA to form the base of the stalk. The C-terminus forms an elongated spine to which L12 dimers bind in a sequential fashion forming a multimeric L10(L12)X complex.

Its function is as follows. Forms part of the ribosomal stalk, playing a central role in the interaction of the ribosome with GTP-bound translation factors. In Staphylococcus epidermidis (strain ATCC 35984 / DSM 28319 / BCRC 17069 / CCUG 31568 / BM 3577 / RP62A), this protein is Large ribosomal subunit protein uL10.